The chain runs to 271 residues: GPN-loop GTPase 3 (271 aa).

GTP is bound at residue 13–18 (GVGKST). The short motif at 70 to 72 (GPN) is the Gly-Pro-Asn (GPN)-loop; involved in dimer interface element. 173-176 (SKMD) is a binding site for GTP.

It belongs to the GPN-loop GTPase family. Heterodimers with GPN1 or GPN2. Binds to RNA polymerase II (RNAPII).

Functionally, small GTPase required for proper nuclear import of RNA polymerase II and III (RNAPII and RNAPIII). May act at an RNAP assembly step prior to nuclear import. This Yarrowia lipolytica (strain CLIB 122 / E 150) (Yeast) protein is GPN-loop GTPase 3.